A 406-amino-acid polypeptide reads, in one-letter code: Solanesyl diphosphate synthase 1, chloroplastic (406 aa).

Residues 1–71 (MMTSCRNIDL…NGIGQSQTVS (71 aa)) constitute a chloroplast transit peptide. Positions 126, 129, and 164 each coordinate isopentenyl diphosphate. Mg(2+) is bound by residues Asp-171 and Asp-175. Arg-180 is a binding site for an all-trans-polyprenyl diphosphate. Arg-181 contributes to the isopentenyl diphosphate binding site. The an all-trans-polyprenyl diphosphate site is built by Lys-257, Thr-258, Gln-295, and Lys-312.

The protein belongs to the FPP/GGPP synthase family. As to quaternary structure, homodimer. Interacts with FBN5. Requires Mg(2+) as cofactor. In terms of tissue distribution, higher expression in leaves than in roots.

The protein resides in the plastid. It is found in the chloroplast. The catalysed reaction is 5 isopentenyl diphosphate + (2E,6E,10E)-geranylgeranyl diphosphate = all-trans-nonaprenyl diphosphate + 5 diphosphate. It carries out the reaction isopentenyl diphosphate + (2E,6E)-farnesyl diphosphate = (2E,6E,10E)-geranylgeranyl diphosphate + diphosphate. Involved in providing solanesyl diphosphate for plastoquinone-9 (PQ-9) formation in plastids. Catalyzes the elongation of the prenyl side chain of PQ-9 in plastids. Contributes to the biosynthesis of plastochromanol-8 (PC-8) in plastids. Does not contribute to the synthesis of tocopherol or ubiquinone. PQ-9 and PC-8 are lipophilic antioxidants that act as protectant against photooxidative stress under high light stress conditions. Prefers geranylgeranyl diphosphate to farnesyl diphosphate as substrate. No activity with geranyl diphosphate or dimethylallyl diphosphate as substrate. The protein is Solanesyl diphosphate synthase 1, chloroplastic of Arabidopsis thaliana (Mouse-ear cress).